Here is a 289-residue protein sequence, read N- to C-terminus: (+)-kolavelool synthase (289 aa).

This sequence belongs to the diterpene synthase family.

The enzyme catalyses (+)-kolavenyl diphosphate + H2O = (+)-kolavelool + diphosphate. In terms of biological role, involved in the biosynthesis of (+)-O-methylkolavelool. Catalyzes the biosynthesis of (+)-kolavelool from (+)-kolavenyl diphosphate via the release of the diphosphate moiety through the nucleophilic addition of a water molecule. The polypeptide is (+)-kolavelool synthase (Herpetosiphon aurantiacus (strain ATCC 23779 / DSM 785 / 114-95)).